The primary structure comprises 755 residues: Anaphase-promoting complex subunit 5 (755 aa).

The residue at position 195 (Ser-195) is a Phosphoserine. 13 TPR repeats span residues 209–249 (QKQA…FNPD), 250–300 (FAEA…GRSL), 301–337 (RYAALNLAALHCRFGHYQQAELALQEAIRIAQESNDH), 338–378 (VCLQ…YLAS), 379–418 (LGIQSLVQQRAFAGKTANKLMDALKDSDLLHWKHSLSELI), 419–466 (DISI…TESF), 467–500 (AVALCHLAELHAEQGCFAAASEVLKHLKERFPPN), 501–540 (SQHAQLWMLCDQKIQFDRAMNDGKYHLADSLVTGITALNS), 541–580 (IEGVYRKAVVLQAQNQMSEAHKLLQKLLVHCQKLKNTEMV), 581–620 (ISVLLSVAELYWRSSSPTIALPMLLQALALSKEYRLQYLA), 621–660 (SETVLNLAFAQLILGIPEQALSLLHMAIEPILADGAILDK), 661–696 (GRAMFLVAKCQVASAASYDQPKKAEALEAAIENLNE), and 697–736 (AKNYFAKVDCKERIRDVVYFQARLYHTLGKTQERNRCAML). Thr-232 carries the phosphothreonine modification.

It belongs to the APC5 family. In terms of assembly, the mammalian APC/C is composed at least of 14 distinct subunits ANAPC1, ANAPC2, CDC27/APC3, ANAPC4, ANAPC5, CDC16/APC6, ANAPC7, CDC23/APC8, ANAPC10, ANAPC11, CDC26/APC12, ANAPC13, ANAPC15 and ANAPC16 that assemble into a complex of at least 19 chains with a combined molecular mass of around 1.2 MDa; APC/C interacts with FZR1 and FBXO5.

The protein localises to the nucleus. It is found in the cytoplasm. The protein resides in the cytoskeleton. It localises to the spindle. It functions in the pathway protein modification; protein ubiquitination. Its function is as follows. Component of the anaphase promoting complex/cyclosome (APC/C), a cell cycle-regulated E3 ubiquitin ligase that controls progression through mitosis and the G1 phase of the cell cycle. The APC/C complex acts by mediating ubiquitination and subsequent degradation of target proteins: it mainly mediates the formation of 'Lys-11'-linked polyubiquitin chains and, to a lower extent, the formation of 'Lys-48'- and 'Lys-63'-linked polyubiquitin chains. The APC/C complex catalyzes assembly of branched 'Lys-11'-/'Lys-48'-linked branched ubiquitin chains on target proteins. This Homo sapiens (Human) protein is Anaphase-promoting complex subunit 5 (ANAPC5).